Consider the following 490-residue polypeptide: GTPase Der (490 aa).

EngA-type G domains follow at residues 3–166 (PVIA…PKDE) and 196–369 (IKIA…KSAV). GTP contacts are provided by residues 9–16 (GRPNVGKS), 56–60 (DTGGI), 118–121 (NKID), 202–209 (GRPNVGKS), 249–253 (DTAGV), and 314–317 (NKWD). One can recognise a KH-like domain in the interval 370–454 (TRWPTSRLTQ…PIRIEFKGGE (85 aa)). The disordered stretch occupies residues 452–490 (GGENPYEGNKNTLTDRQVNKKRRMMSHHKKADKKRRDKR). Residues 470-490 (NKKRRMMSHHKKADKKRRDKR) are compositionally biased toward basic residues.

The protein belongs to the TRAFAC class TrmE-Era-EngA-EngB-Septin-like GTPase superfamily. EngA (Der) GTPase family. As to quaternary structure, associates with the 50S ribosomal subunit.

GTPase that plays an essential role in the late steps of ribosome biogenesis. This is GTPase Der from Pseudomonas savastanoi pv. phaseolicola (strain 1448A / Race 6) (Pseudomonas syringae pv. phaseolicola (strain 1448A / Race 6)).